Consider the following 287-residue polypeptide: Formamidopyrimidine-DNA glycosylase (287 aa).

Catalysis depends on Pro-2, which acts as the Schiff-base intermediate with DNA. Residue Glu-3 is the Proton donor of the active site. Lys-58 functions as the Proton donor; for beta-elimination activity in the catalytic mechanism. Positions 104, 123, and 166 each coordinate DNA. An FPG-type zinc finger spans residues 251-287 (RVYDREGEPCPTPACKGVIAREVQAGRSTFFCPVCQV). The Proton donor; for delta-elimination activity role is filled by Arg-277.

The protein belongs to the FPG family. In terms of assembly, monomer. Requires Zn(2+) as cofactor.

It carries out the reaction Hydrolysis of DNA containing ring-opened 7-methylguanine residues, releasing 2,6-diamino-4-hydroxy-5-(N-methyl)formamidopyrimidine.. The catalysed reaction is 2'-deoxyribonucleotide-(2'-deoxyribose 5'-phosphate)-2'-deoxyribonucleotide-DNA = a 3'-end 2'-deoxyribonucleotide-(2,3-dehydro-2,3-deoxyribose 5'-phosphate)-DNA + a 5'-end 5'-phospho-2'-deoxyribonucleoside-DNA + H(+). In terms of biological role, involved in base excision repair of DNA damaged by oxidation or by mutagenic agents. Acts as a DNA glycosylase that recognizes and removes damaged bases. Has a preference for oxidized purines, such as 7,8-dihydro-8-oxoguanine (8-oxoG). Has AP (apurinic/apyrimidinic) lyase activity and introduces nicks in the DNA strand. Cleaves the DNA backbone by beta-delta elimination to generate a single-strand break at the site of the removed base with both 3'- and 5'-phosphates. The chain is Formamidopyrimidine-DNA glycosylase from Caulobacter vibrioides (strain ATCC 19089 / CIP 103742 / CB 15) (Caulobacter crescentus).